Here is a 297-residue protein sequence, read N- to C-terminus: Cell division protein FtsX (297 aa).

Topologically, residues Met1 to Thr24 are cytoplasmic. The helical transmembrane segment at Phe25–Ile45 threads the bilayer. Residues Met46 to Asn171 are Extracellular-facing. The chain crosses the membrane as a helical span at residues Ile172–Ile192. Residues Lys193–Pro219 are Cytoplasmic-facing. A helical membrane pass occupies residues Phe220–Leu240. Residues Val241–Gln270 lie on the Extracellular side of the membrane. A helical membrane pass occupies residues Leu271–Ile291. Residues Arg292 to Val297 are Cytoplasmic-facing.

Belongs to the ABC-4 integral membrane protein family. FtsX subfamily. Interacts with FtsE.

It localises to the cell membrane. Functionally, part of the ABC transporter FtsEX involved in asymmetric cellular division facilitating the initiation of sporulation. The sequence is that of Cell division protein FtsX from Bacillus anthracis.